We begin with the raw amino-acid sequence, 58 residues long: MATLKVTQIGSPIRRSPDQRATLIGLGLNKMHRTRELKDTPDVRGMLRKVAHLVKVEN.

The protein belongs to the universal ribosomal protein uL30 family. In terms of assembly, part of the 50S ribosomal subunit.

This is Large ribosomal subunit protein uL30 from Zymomonas mobilis subsp. mobilis (strain ATCC 31821 / ZM4 / CP4).